The chain runs to 245 residues: tRNA pseudouridine synthase A 2 (245 aa).

D53 (nucleophile) is an active-site residue. Residue Y111 coordinates substrate.

This sequence belongs to the tRNA pseudouridine synthase TruA family. In terms of assembly, homodimer.

It catalyses the reaction uridine(38/39/40) in tRNA = pseudouridine(38/39/40) in tRNA. Functionally, formation of pseudouridine at positions 38, 39 and 40 in the anticodon stem and loop of transfer RNAs. The chain is tRNA pseudouridine synthase A 2 from Bacillus cereus (strain ATCC 10987 / NRS 248).